A 137-amino-acid polypeptide reads, in one-letter code: Acidic phospholipase A2 beta-bungarotoxin A chain (137 aa).

The signal sequence occupies residues 1–9 (AVCVSLLGA). A propeptide spanning residues 10–17 (ANIPPHPL) is cleaved from the precursor. 6 disulfides stabilise this stretch: C44-C136, C46-C62, C61-C117, C68-C110, C78-C103, and C96-C108. Ca(2+)-binding residues include Y45, G47, and G49. Residue H65 is part of the active site. D66 serves as a coordination point for Ca(2+). The active site involves D111.

The protein belongs to the phospholipase A2 family. Group I subfamily. D49 sub-subfamily. In terms of assembly, heterodimer; disulfide-linked. The A chain has phospholipase A2 activity and the B chain shows homology with the basic protease inhibitors. Ca(2+) is required as a cofactor. Expressed by the venom gland.

The protein resides in the secreted. It carries out the reaction a 1,2-diacyl-sn-glycero-3-phosphocholine + H2O = a 1-acyl-sn-glycero-3-phosphocholine + a fatty acid + H(+). Functionally, beta bungarotoxin is a presynaptic neurotoxin. The A chain has phospholipase activity. PLA2 catalyzes the calcium-dependent hydrolysis of the 2-acyl groups in 3-sn-phosphoglycerides. The chain is Acidic phospholipase A2 beta-bungarotoxin A chain from Bungarus candidus (Malayan krait).